The primary structure comprises 611 residues: Sensor histidine kinase WalK (611 aa).

Over 1-13 (MNKVGFFRSIQFK) the chain is Cytoplasmic. The helical transmembrane segment at 14–34 (ITLIYVLLIIIAMQIIGVYFV) threads the bilayer. Topologically, residues 35-182 (NQVEKSLISS…VFNQMKTINT (148 aa)) are extracellular. Residues 183 to 203 (ILASGTGLALVLTALLGIFLA) form a helical membrane-spanning segment. The HAMP domain occupies 204-256 (RTITHPLSDMRKQAMELAKGNFSRKVKKYGHDEIGQLATTFNHLTRELEDAQA). Residues 204–611 (RTITHPLSDM…EEQEDDWDEA (408 aa)) are Cytoplasmic-facing. The PAS domain occupies 263–324 (RKLASVIAYM…QENYTFEDLV (62 aa)). A PAC domain is found at 325 to 379 (EQQDSMLLEIERDDELTVLRVNFSVIQREHGKIDGLIAVIYDVTEQEKMDQERRE). The Histidine kinase domain occupies 383–602 (NVSHELRTPL…TITFTLPYKE (220 aa)). Residue His-386 is modified to Phosphohistidine; by autocatalysis.

Homodimer. Interacts with YycH and YycI. Post-translationally, autophosphorylated.

The protein localises to the cell membrane. It catalyses the reaction ATP + protein L-histidine = ADP + protein N-phospho-L-histidine.. Functionally, member of the two-component regulatory system WalK/WalR involved in the regulation of the ftsAZ operon, the yocH and ykvT, cwlO, lytE, ydjM, yjeA, yoeB genes and the tagAB and tagDEF operons. Phosphorylates WalR. This is Sensor histidine kinase WalK from Bacillus subtilis (strain 168).